Here is a 352-residue protein sequence, read N- to C-terminus: UDP-N-acetylglucosamine--N-acetylmuramyl-(pentapeptide) pyrophosphoryl-undecaprenol N-acetylglucosamine transferase 2 (352 aa).

Residues S11 to G13, R164, S194, and Q289 contribute to the UDP-N-acetyl-alpha-D-glucosamine site.

It belongs to the glycosyltransferase 28 family. MurG subfamily.

The protein localises to the cell membrane. The catalysed reaction is di-trans,octa-cis-undecaprenyl diphospho-N-acetyl-alpha-D-muramoyl-L-alanyl-D-glutamyl-meso-2,6-diaminopimeloyl-D-alanyl-D-alanine + UDP-N-acetyl-alpha-D-glucosamine = di-trans,octa-cis-undecaprenyl diphospho-[N-acetyl-alpha-D-glucosaminyl-(1-&gt;4)]-N-acetyl-alpha-D-muramoyl-L-alanyl-D-glutamyl-meso-2,6-diaminopimeloyl-D-alanyl-D-alanine + UDP + H(+). Its pathway is cell wall biogenesis; peptidoglycan biosynthesis. Its function is as follows. Cell wall formation. Catalyzes the transfer of a GlcNAc subunit on undecaprenyl-pyrophosphoryl-MurNAc-pentapeptide (lipid intermediate I) to form undecaprenyl-pyrophosphoryl-MurNAc-(pentapeptide)GlcNAc (lipid intermediate II). The polypeptide is UDP-N-acetylglucosamine--N-acetylmuramyl-(pentapeptide) pyrophosphoryl-undecaprenol N-acetylglucosamine transferase 2 (Bacillus thuringiensis subsp. konkukian (strain 97-27)).